An 862-amino-acid chain; its full sequence is MSPESWKDQLSLVSADDYRIMGRNRIPNAVTKLSGLETDDPNGGAWVTKPKRIVVSNQLPLRAHRDISSNKWCFEFDNDSLYLQLKDGFPPETEVVYVGSLNADVLPSEQEDVSQFLLEKFQCVPTFLPSDLLNKYYHGFCKHYLWPIFHYLLPMTQAQGSLFDRSNWRAYTTVNKIFADKIFEVLNPDDDYVWIHDYHLMILPTFLRNRFHRIKLGIFLHSPFPSSEIYRTLPVRDEILKGFLNCDLVGFHTFDYARHFLSCCSRMLGLDYESKRGYIGLEYFGRTVSIKILPVGIHMGQIESIKASEKTAEKVKRLRERFKGNIVMLGVDDLDMFKGISLKFWAMGQLLEQNEELRGKVVLVQITNPARSSGKDVQDVEKQINLIADEINSKFGRPGGYKPIVFINGPVSTLDKVAYYAISECVVVNAVRDGMNLVPYKYTVTRQGSPALDAALGFGEDDVRKSVIIVSEFIGCSPSLSGAIRVNPWNIDAVTNAMSSAMTMSDKEKNLRHQKHHKYISSHNVAYWARSYDQDLQRACKDHYNKRFWGVGFGLFFKVVALDPNFRRLCGETIVPAYRRSSSRLILLDYDGTMMDQDTLDKRPSDDLISLLNRLCDDPSNLVFIVSGRGKDPLSKWFDSCPNLGISAEHGYFTRWNSNSPWETSELPADLSWKKIAKPVMNHYMEATDGSFIEEKESAMVWHHQEADHSFGSWQAKELLDHLESVLTNEPVVVKRGQHIVEVKPQGVSKGKVVEHLIATMRNTKGKRPDFLLCIGDDRSDEDMFDSIVKHQDVSSIGLEEVFACTVGQKPSKAKYYLDDTPSVIKMLEWLASASDGSKHEQQKKQSKFTFQQPMGQCRKKA.

Serine 5 carries the post-translational modification Phosphoserine. Residues 50–538 (PKRIVVSNQL…ARSYDQDLQR (489 aa)) are glycosyltransferase. The disordered stretch occupies residues 838-862 (SKHEQQKKQSKFTFQQPMGQCRKKA).

In the N-terminal section; belongs to the glycosyltransferase 20 family. This sequence in the C-terminal section; belongs to the trehalose phosphatase family. Expressed in leaves, roots, stems and flowers.

It catalyses the reaction D-glucose 6-phosphate + UDP-alpha-D-glucose = alpha,alpha-trehalose 6-phosphate + UDP + H(+). In Arabidopsis thaliana (Mouse-ear cress), this protein is Probable alpha,alpha-trehalose-phosphate synthase [UDP-forming] 11 (TPS11).